The primary structure comprises 1088 residues: Tyrocidine synthase 1 (1088 aa).

Residues 528-602 form the Carrier domain; the sequence is PPRTETESIL…QVALFVKSTT (75 aa). Residue S563 is modified to O-(pantetheine 4'-phosphoryl)serine.

The protein belongs to the ATP-dependent AMP-binding enzyme family. Large multienzyme complex of TycA, TycB and TycC. Pantetheine 4'-phosphate is required as a cofactor.

It catalyses the reaction L-phenylalanine + ATP + H2O = D-phenylalanine + AMP + diphosphate + H(+). It functions in the pathway antibiotic biosynthesis; tyrocidine biosynthesis. Its function is as follows. In the first step of peptide synthesis this enzyme activates phenylalanine and racemizes it to the D-isomer. The polypeptide is Tyrocidine synthase 1 (tycA) (Brevibacillus parabrevis).